The sequence spans 260 residues: Proteasome subunit alpha (260 aa).

The segment at 241–260 is disordered; that stretch reads VEEEEVKEKEEDYSELDSHY.

The protein belongs to the peptidase T1A family. In terms of assembly, the 20S proteasome core is composed of 14 alpha and 14 beta subunits that assemble into four stacked heptameric rings, resulting in a barrel-shaped structure. The two inner rings, each composed of seven catalytic beta subunits, are sandwiched by two outer rings, each composed of seven alpha subunits. The catalytic chamber with the active sites is on the inside of the barrel. Has a gated structure, the ends of the cylinder being occluded by the N-termini of the alpha-subunits. Is capped at one or both ends by the proteasome regulatory ATPase, PAN.

It is found in the cytoplasm. Its activity is regulated as follows. The formation of the proteasomal ATPase PAN-20S proteasome complex, via the docking of the C-termini of PAN into the intersubunit pockets in the alpha-rings, triggers opening of the gate for substrate entry. Interconversion between the open-gate and close-gate conformations leads to a dynamic regulation of the 20S proteasome proteolysis activity. Its function is as follows. Component of the proteasome core, a large protease complex with broad specificity involved in protein degradation. This Pyrococcus horikoshii (strain ATCC 700860 / DSM 12428 / JCM 9974 / NBRC 100139 / OT-3) protein is Proteasome subunit alpha.